The sequence spans 763 residues: Amine oxidase [copper-containing] 3 (763 aa).

Over 1–6 (MNQKTT) the chain is Cytoplasmic. Residues 7–27 (LVLLALAVITIFALVCVLIAG) traverse the membrane as a helical; Signal-anchor for type II membrane protein segment. Over 28–763 (RGGDGGEASQ…AFSHGGFFTN (736 aa)) the chain is Extracellular. An N-linked (GlcNAc...) asparagine glycan is attached at N137. C198 and C199 are joined by a disulfide. 2 N-linked (GlcNAc...) asparagine glycosylation sites follow: N232 and N294. D386 (proton acceptor) is an active-site residue. Residues C404 and C430 are joined by a disulfide bond. Y471 acts as the Schiff-base intermediate with substrate; via topaquinone in catalysis. Y471 is subject to 2',4',5'-topaquinone. Residues H520 and H522 each coordinate Cu(2+). The Ca(2+) site is built by D529, L530, D531, and E572. N-linked (GlcNAc...) asparagine glycosylation occurs at N618. E641, F663, and N665 together coordinate Ca(2+). An N-linked (GlcNAc...) asparagine glycan is attached at N666. 3 residues coordinate Ca(2+): E667, D673, and L674. A Cu(2+)-binding site is contributed by H684. The cysteines at positions 734 and 741 are disulfide-linked.

It belongs to the copper/topaquinone oxidase family. As to quaternary structure, homodimer; disulfide-linked. Probably forms heterodimers with AOC2. Requires Cu(2+) as cofactor. Ca(2+) serves as cofactor. The cofactor is L-topaquinone. Post-translationally, topaquinone (TPQ) is generated by copper-dependent autoxidation of a specific tyrosyl residue. N- and O-glycosylated.

The protein resides in the cell membrane. The enzyme catalyses methylamine + O2 + H2O = formaldehyde + H2O2 + NH4(+). It carries out the reaction benzylamine + O2 + H2O = benzaldehyde + H2O2 + NH4(+). The catalysed reaction is 2-phenylethylamine + O2 + H2O = 2-phenylacetaldehyde + H2O2 + NH4(+). Functionally, catalyzes the oxidative deamination of primary amines to the corresponding aldehydes with the concomitant production of hydrogen peroxide and ammonia. Has a preference for the primary monoamines methylamine and benzylamine. Could also act on 2-phenylethylamine but much less efficiently. At endothelial cells surface can also function as a cell adhesion protein that participates in lymphocyte extravasation and recirculation by mediating the binding of lymphocytes to peripheral lymph node vascular endothelial cells in an L-selectin-independent fashion. The sequence is that of Amine oxidase [copper-containing] 3 from Bos taurus (Bovine).